A 221-amino-acid polypeptide reads, in one-letter code: GTP cyclohydrolase 1 (221 aa).

Zn(2+)-binding residues include Cys109, His112, and Cys180.

Belongs to the GTP cyclohydrolase I family. In terms of assembly, toroid-shaped homodecamer, composed of two pentamers of five dimers.

It carries out the reaction GTP + H2O = 7,8-dihydroneopterin 3'-triphosphate + formate + H(+). The protein operates within cofactor biosynthesis; 7,8-dihydroneopterin triphosphate biosynthesis; 7,8-dihydroneopterin triphosphate from GTP: step 1/1. The sequence is that of GTP cyclohydrolase 1 from Blochmanniella pennsylvanica (strain BPEN).